Here is a 110-residue protein sequence, read N- to C-terminus: UPF0060 membrane protein RPA3838 (110 aa).

Transmembrane regions (helical) follow at residues 4–24, 31–51, 59–79, and 85–105; these read LLTF…FWAW, PLWL…LTLA, AYAA…WAIE, and QWDV…LFGP.

This sequence belongs to the UPF0060 family.

It localises to the cell inner membrane. The sequence is that of UPF0060 membrane protein RPA3838 from Rhodopseudomonas palustris (strain ATCC BAA-98 / CGA009).